Reading from the N-terminus, the 215-residue chain is Protein-L-isoaspartate O-methyltransferase 1 (215 aa).

Residue Ser-61 is part of the active site.

It belongs to the methyltransferase superfamily. L-isoaspartyl/D-aspartyl protein methyltransferase family.

Its subcellular location is the cytoplasm. It catalyses the reaction [protein]-L-isoaspartate + S-adenosyl-L-methionine = [protein]-L-isoaspartate alpha-methyl ester + S-adenosyl-L-homocysteine. Its function is as follows. Catalyzes the methyl esterification of L-isoaspartyl residues in peptides and proteins that result from spontaneous decomposition of normal L-aspartyl and L-asparaginyl residues. It plays a role in the repair and/or degradation of damaged proteins. In Pelobacter propionicus (strain DSM 2379 / NBRC 103807 / OttBd1), this protein is Protein-L-isoaspartate O-methyltransferase 1.